A 178-amino-acid chain; its full sequence is Large ribosomal subunit protein uL10 (178 aa).

This sequence belongs to the universal ribosomal protein uL10 family. In terms of assembly, part of the ribosomal stalk of the 50S ribosomal subunit. The N-terminus interacts with L11 and the large rRNA to form the base of the stalk. The C-terminus forms an elongated spine to which L12 dimers bind in a sequential fashion forming a multimeric L10(L12)X complex.

Its function is as follows. Forms part of the ribosomal stalk, playing a central role in the interaction of the ribosome with GTP-bound translation factors. The sequence is that of Large ribosomal subunit protein uL10 from Salinibacter ruber (strain DSM 13855 / M31).